Consider the following 350-residue polypeptide: Arginine/serine-rich coiled-coil protein 2 (350 aa).

2 disordered regions span residues 1–146 (MIRT…FRGR) and 328–350 (SQTHTQRGMGLGFTSSMRGMDAV). Over residues 10–24 (QARRHEVKAKSSKKH) the composition is skewed to basic residues. The segment covering 25–51 (RSDDTVDRDHSDKIRDRLNSSENGDEK) has biased composition (basic and acidic residues). Positions 52–132 (HRRKEKRSSR…IEKPRRHSRS (81 aa)) are enriched in basic residues. The stretch at 146–187 (RNAAMDAQEALARRLERAKKLQEQREKESAEKQQEIAAVAAA) forms a coiled coil.

Belongs to the RSRC2 family.

The polypeptide is Arginine/serine-rich coiled-coil protein 2 (rsrc2) (Xenopus laevis (African clawed frog)).